The chain runs to 246 residues: Transmembrane and ubiquitin-like domain-containing protein 1 (246 aa).

Positions 2-30 are required to release iHOPS from membranes; that stretch reads ALIEGVGDEVTILFSALACLLVLALAWVS. Residues 11–31 traverse the membrane as a helical segment; sequence VTILFSALACLLVLALAWVST. Positions 35–102 are disordered; sequence EGADPLPQPS…PPPPDSPQEP (68 aa). Pro residues predominate over residues 40–50; that stretch reads LPQPSGTPTPT. A phosphothreonine mark is found at T71 and T92. 2 positions are modified to phosphoserine: S98 and S127. Residues 103-176 form the Ubiquitin-like domain; it reads LVLRLKFLND…LHCHVSTRVG (74 aa). The next 2 membrane-spanning stretches (helical) occupy residues 195 to 215 and 221 to 241; these read VGSL…YCQI and FPLT…LLAF.

In terms of assembly, interacts with EEF1A1, GRIA2, GRIP1, CAMLG, TUBG1. Interacts with NPM1 and CDKN2A; TMUB1 can enhance interaction between NPM1 and CDKN2A and is proposed to bridge the proteins; proposed to be mediated by iHOPS. Interacts with ERLIN2 and AMFR; TMUB1 promotes the interaction of ERLIN2 with AMFR. Processed by regulated intramembrane proteolysis (RIP) in the N-terminus to release iHOPS from membranes.

The protein localises to the membrane. Its subcellular location is the postsynaptic cell membrane. It is found in the recycling endosome. It localises to the cytoplasm. The protein resides in the nucleus. The protein localises to the nucleolus. Its subcellular location is the cytoskeleton. It is found in the microtubule organizing center. It localises to the centrosome. Its function is as follows. Involved in sterol-regulated ubiquitination and degradation of HMG-CoA reductase HMGCR. Involved in positive regulation of AMPA-selective glutamate receptor GRIA2 recycling to the cell surface. Acts as negative regulator of hepatocyte growth during regeneration. In terms of biological role, may contribute to the regulation of translation during cell-cycle progression. May contribute to the regulation of cell proliferation. May be involved in centrosome assembly. Modulates stabilization and nucleolar localization of tumor suppressor CDKN2A and enhances association between CDKN2A and NPM1. In Bos taurus (Bovine), this protein is Transmembrane and ubiquitin-like domain-containing protein 1 (TMUB1).